Consider the following 622-residue polypeptide: Sodium/potassium/calcium exchanger 4 (622 aa).

The N-terminal stretch at 1–38 (MALRGTLRPLKVRRRREMLPQQVGFVCAVLALVCCASG) is a signal peptide. Over 39-97 (LFGSLGHKTASASKRVLPDTWRNRKLMAPVNGTQTAKNCTDPAIHEFPTDLFSNKERQH) the chain is Extracellular. Residues N69 and N76 are each glycosylated (N-linked (GlcNAc...) asparagine). The helical transmembrane segment at 98–118 (GAVLLHILGALYMFYALAIVC) threads the bilayer. Over 119–142 (DDFFVPSLEKICERLHLSEDVAGA) the chain is Cytoplasmic. One copy of the Alpha-1 repeat lies at 139 to 179 (VAGATFMAAGSSTPELFASVIGVFITHGDVGVGTIVGSAVF). A helical membrane pass occupies residues 143–163 (TFMAAGSSTPELFASVIGVFI). Topologically, residues 164-172 (THGDVGVGT) are extracellular. The chain crosses the membrane as a helical span at residues 173–193 (IVGSAVFNILCIIGVCGLFAG). Over 194 to 200 (QVVRLTW) the chain is Cytoplasmic. The helical transmembrane segment at 201–221 (WAVCRDSVYYTISVIVLIVFI) threads the bilayer. The Extracellular portion of the chain corresponds to 222–224 (YDE). The helical transmembrane segment at 225–245 (QIVWWEGLVLIILYVFYILIM) threads the bilayer. The Cytoplasmic segment spans residues 246-457 (KYNVKMQAFF…RWEKFFMVTF (212 aa)). The disordered stretch occupies residues 358 to 410 (ANGVSSKPLQNGRHENIENGNVPVENPEDPQQNQEQQPPPQPPPPEPEPVEAD). The segment covering 380 to 393 (PVENPEDPQQNQEQ) has biased composition (low complexity). Pro residues predominate over residues 394 to 404 (QPPPQPPPPEP). Residues 458–478 (ITATLWIAVFSYIMVWLVTII) form a helical membrane-spanning segment. Residue G479 is a topological domain, extracellular. A helical transmembrane segment spans residues 480–500 (YTLGIPDVIMGITFLAAGTSV). The stretch at 495 to 526 (AAGTSVPDCMASLIVARQGLGDMAVSNTIGSN) is one Alpha-2 repeat. The Cytoplasmic portion of the chain corresponds to 501–526 (PDCMASLIVARQGLGDMAVSNTIGSN). Residues 527–547 (VFDILVGLGVPWGLQTMVVNY) form a helical membrane-spanning segment. Residues 548–557 (GSTVKINSRG) lie on the Extracellular side of the membrane. A helical membrane pass occupies residues 558–578 (LVYSVVLLLGSVALTVLGIHL). The Cytoplasmic portion of the chain corresponds to 579-586 (NKWRLDRK). A helical transmembrane segment spans residues 587 to 607 (LGVYVLVLYAIFLCFSIMIEF). The Extracellular portion of the chain corresponds to 608–622 (NVFTFVNLPMCREDD).

Belongs to the Ca(2+):cation antiporter (CaCA) (TC 2.A.19) family. SLC24A subfamily. In terms of tissue distribution, expressed abundantly in all regions of the brain, aorta, lung and thymus. Expressed at lower levels in the stomach and intestine.

Its subcellular location is the cell membrane. It is found in the cytoplasm. The enzyme catalyses Ca(2+)(out) + K(+)(out) + 4 Na(+)(in) = Ca(2+)(in) + K(+)(in) + 4 Na(+)(out). Calcium, potassium:sodium antiporter that transports 1 Ca(2+) and 1 K(+) in exchange for 4 Na(+). Controls the rapid response termination and proper regulation of adaptation in olfactory sensory neurons (OSNs) which subsequently influences how odor information is encoded and perceived. May play a role in calcium transport during amelogenesis. The sequence is that of Sodium/potassium/calcium exchanger 4 from Homo sapiens (Human).